A 171-amino-acid polypeptide reads, in one-letter code: Phosphopantetheine adenylyltransferase (171 aa).

T9 is a substrate binding site. ATP-binding positions include 9–10 (TF) and H17. Substrate-binding residues include K41, L73, and R87. ATP contacts are provided by residues 88-90 (GLR), E98, and 123-129 (YQFISGT).

This sequence belongs to the bacterial CoaD family. As to quaternary structure, homohexamer. Mg(2+) is required as a cofactor.

It is found in the cytoplasm. The enzyme catalyses (R)-4'-phosphopantetheine + ATP + H(+) = 3'-dephospho-CoA + diphosphate. It functions in the pathway cofactor biosynthesis; coenzyme A biosynthesis; CoA from (R)-pantothenate: step 4/5. Reversibly transfers an adenylyl group from ATP to 4'-phosphopantetheine, yielding dephospho-CoA (dPCoA) and pyrophosphate. This Paraburkholderia xenovorans (strain LB400) protein is Phosphopantetheine adenylyltransferase.